The following is a 507-amino-acid chain: Glucose transporter type 3 (507 aa).

A disordered region spans residues 1–26 (MRKGGIQDAEPVEPPQSSRKSGTWFA). Over 1–53 (MRKGGIQDAEPVEPPQSSRKSGTWFAKRPSEMPERHVERAPVRQKINNVGLYK) the chain is Cytoplasmic. A helical transmembrane segment spans residues 54–74 (ATLYSNIGSFFFGIAVGWSGT). The Extracellular segment spans residues 75-95 (AERSVMEQHSYSFQPTELQWS). The chain crosses the membrane as a helical span at residues 96 to 116 (GVCILLTLGAALWCLPMGLMV). Residues 117 to 124 (RLLGCRRT) lie on the Cytoplasmic side of the membrane. A helical transmembrane segment spans residues 125–145 (ILIQLLPNFLGWFLTVFARSV). Residues 146–152 (PMLYAGR) are Extracellular-facing. The chain crosses the membrane as a helical span at residues 153–173 (FFLGMCGGAHCVVVPIYNAEI). The Cytoplasmic segment spans residues 174 to 183 (STTKKRGAMG). A helical membrane pass occupies residues 184 to 204 (VVFEGACICGVIYSFAMSLFL). The Extracellular portion of the chain corresponds to 205–207 (ELR). The helical transmembrane segment at 208-228 (IINFVNLGLLALGPLQILMPE) threads the bilayer. The Cytoplasmic segment spans residues 229–293 (SPAYYVDHGN…YKKVRRSLAR (65 aa)). A helical membrane pass occupies residues 294–314 (SLAIALLQKLCGALIFIFYGL). Topologically, residues 315 to 324 (NMLDCLRIRR) are extracellular. Residues 325 to 345 (EFGLILCLGLILGFLACFFLV) form a helical membrane-spanning segment. At 346-351 (DRLGRR) the chain is on the cytoplasmic side. The helical transmembrane segment at 352–372 (PLLIFSSAGIVFVSIYLGLHF) threads the bilayer. Residues 373 to 374 (KV) lie on the Extracellular side of the membrane. A helical membrane pass occupies residues 375–395 (WMTMGLTVMSWIALFCIAIFV). Over 396–420 (GCYTAGVGSLTWVLNAELLVRPMRP) the chain is Cytoplasmic. Residues 421-441 (LGCSIVCAFNWLTAFFVICWF) form a helical membrane-spanning segment. The Extracellular portion of the chain corresponds to 442–450 (GSHGVKCQP). The helical transmembrane segment at 451-471 (YLFLLFAIIASLILLFSLIYI) threads the bilayer. Over 472–507 (PETKKLSSAKIQQRLGGLINRPAVITFTSSSDSSNA) the chain is Cytoplasmic.

This sequence belongs to the major facilitator superfamily. Sugar transporter (TC 2.A.1.1) family. Glucose transporter subfamily.

The protein localises to the cell membrane. It localises to the perikaryon. Its subcellular location is the cell projection. Functionally, facilitative glucose transporter that can also mediate the uptake of various other monosaccharides across the cell membrane. In Drosophila melanogaster (Fruit fly), this protein is Glucose transporter type 3 (Glut3).